A 443-amino-acid chain; its full sequence is D-serine dehydratase (443 aa).

Lys-118 bears the N6-(pyridoxal phosphate)lysine mark.

It belongs to the serine/threonine dehydratase family. DsdA subfamily. In terms of assembly, monomer. The cofactor is pyridoxal 5'-phosphate.

It catalyses the reaction D-serine = pyruvate + NH4(+). The sequence is that of D-serine dehydratase from Photorhabdus laumondii subsp. laumondii (strain DSM 15139 / CIP 105565 / TT01) (Photorhabdus luminescens subsp. laumondii).